The sequence spans 436 residues: MNVHESHPRRDRDLENITLEALTVPWRLQFRVDEALYAVNPNGWTCYIEERDQRCLRVTNNCVISLLKSDLKRRYQTCTLNIGIRVAVPQNYVVILAKLTDPDPTSRGIPIIQVANGLIDSGYRGSIRAVLFFEKSCIIPKNGLAIRLSLVKLASPNLNTRVLFNLSDITPHLECGPDFSTSIETAVRLGSGETKPLLPPSGGGIWAGTGCRALACLYNDRVCKASHYTSSDKNIAFVVRYNDSTSVLGLKDFPTAEDETFVRFYTSGQFATLIPFFETFTPKRTEDAAYDIAAPGDIRLGALSSTTIMIQQRYVCMDDSVIPCIFGRSSMNLRGLIIIPSRWLPNSWLTITICNLTEMTVMIRCGDRIAQLLLVDHESATLIPPTNDTTGMFPTVGKCRRPGASVGEPKWRETLEFDTEAYSSERQFSGFGSTGI.

Substrate contacts are provided by residues 328–330 and 431–432; these read RSS and FG.

The protein belongs to the dUTPase family. Requires Mg(2+) as cofactor.

The catalysed reaction is dUTP + H2O = dUMP + diphosphate + H(+). Involved in nucleotide metabolism: produces dUMP, the immediate precursor of thymidine nucleotides and decreases the intracellular concentration of dUTP to avoid uracil incorporation into viral DNA. The polypeptide is Deoxyuridine 5'-triphosphate nucleotidohydrolase (Gallid herpesvirus 2 (strain Chicken/Md5/ATCC VR-987) (GaHV-2)).